The primary structure comprises 414 residues: Putative transporter AmpG 4 (414 aa).

12 consecutive transmembrane segments (helical) span residues 15–35, 44–63, 84–104, 109–129, 150–170, 177–197, 230–250, 268–288, 295–315, 324–344, 360–379, and 389–409; these read IFILGIVSGMPLVIIFSTLAV, IAVITTFAVARLSYSLKVFW, WLILCSSLMALVLIAMSKENP, TSFYFLTILLGFLSSTFDIAV, VFGYRIGMLITGAGALYLAEI, LTFCVIAIIFVVATIFIITVN, FAVTILLAVIFFKLGDAMLGA, IIAKLYGLIATLVGGFVGGIV, FKGLIITGIAQSLTHFAFIWL, ALLIAITIENFAAAMGATALV, YALLSSASSLCNNTVTIYAG, and GFFLFTIILALPALFILMYLN.

It belongs to the major facilitator superfamily.

The protein localises to the cell inner membrane. This chain is Putative transporter AmpG 4 (ampG4), found in Rickettsia conorii (strain ATCC VR-613 / Malish 7).